The chain runs to 455 residues: tRNA-2-methylthio-N(6)-dimethylallyladenosine synthase (455 aa).

The MTTase N-terminal domain occupies 3 to 117 (KGLYIESYGC…LPELIMKATR (115 aa)). [4Fe-4S] cluster contacts are provided by Cys-12, Cys-48, Cys-80, Cys-155, Cys-159, and Cys-162. The 235-residue stretch at 141 to 375 (VSRGVSAFVS…LLTQQRLFTK (235 aa)) folds into the Radical SAM core domain.

The protein belongs to the methylthiotransferase family. MiaB subfamily. Monomer. [4Fe-4S] cluster serves as cofactor.

Its subcellular location is the cytoplasm. The enzyme catalyses N(6)-dimethylallyladenosine(37) in tRNA + (sulfur carrier)-SH + AH2 + 2 S-adenosyl-L-methionine = 2-methylsulfanyl-N(6)-dimethylallyladenosine(37) in tRNA + (sulfur carrier)-H + 5'-deoxyadenosine + L-methionine + A + S-adenosyl-L-homocysteine + 2 H(+). Catalyzes the methylthiolation of N6-(dimethylallyl)adenosine (i(6)A), leading to the formation of 2-methylthio-N6-(dimethylallyl)adenosine (ms(2)i(6)A) at position 37 in tRNAs that read codons beginning with uridine. This Anaplasma marginale (strain St. Maries) protein is tRNA-2-methylthio-N(6)-dimethylallyladenosine synthase.